A 109-amino-acid polypeptide reads, in one-letter code: MQARNIGLDVSVPEKECTDPHCPFHGNLPVRGQVLTGKVISTAMTRSVVVAREYQQYIPKYERKATKIKKYHVHVPDCIELRVGDTVRFAECRKLAKTISFVVVEKVKQ.

Belongs to the universal ribosomal protein uS17 family. Part of the 30S ribosomal subunit.

In terms of biological role, one of the primary rRNA binding proteins, it binds specifically to the 5'-end of 16S ribosomal RNA. The chain is Small ribosomal subunit protein uS17 from Thermoplasma volcanium (strain ATCC 51530 / DSM 4299 / JCM 9571 / NBRC 15438 / GSS1).